Consider the following 120-residue polypeptide: Flagellar transcriptional regulator FlhD (120 aa).

The protein belongs to the FlhD family. Homodimer; disulfide-linked. Forms a heterohexamer composed of two FlhC and four FlhD subunits. Each FlhC binds a FlhD dimer, forming a heterotrimer, and a hexamer assembles by dimerization of two heterotrimers.

It localises to the cytoplasm. Functionally, functions in complex with FlhC as a master transcriptional regulator that regulates transcription of several flagellar and non-flagellar operons by binding to their promoter region. Activates expression of class 2 flagellar genes, including fliA, which is a flagellum-specific sigma factor that turns on the class 3 genes. Also regulates genes whose products function in a variety of physiological pathways. This chain is Flagellar transcriptional regulator FlhD, found in Erwinia tasmaniensis (strain DSM 17950 / CFBP 7177 / CIP 109463 / NCPPB 4357 / Et1/99).